Reading from the N-terminus, the 419-residue chain is Putative zinc metalloprotease SPs1691 (419 aa).

A Zn(2+)-binding site is contributed by His-18. Glu-19 is an active-site residue. His-22 lines the Zn(2+) pocket. 4 consecutive transmembrane segments (helical) span residues 169–191, 301–323, 343–365, and 392–411; these read LITN…ILLV, LAWS…FSLN, LESV…LIPI, and AYIT…AVTW. Residues 175-274 enclose the PDZ domain; that stretch reads GPMNNFILGI…LKTVAVKPQK (100 aa).

It belongs to the peptidase M50B family. Requires Zn(2+) as cofactor.

Its subcellular location is the cell membrane. The polypeptide is Putative zinc metalloprotease SPs1691 (eep) (Streptococcus pyogenes serotype M3 (strain SSI-1)).